Consider the following 112-residue polypeptide: UPF0342 protein SP_1372 (112 aa).

It belongs to the UPF0342 family.

The polypeptide is UPF0342 protein SP_1372 (Streptococcus pneumoniae serotype 4 (strain ATCC BAA-334 / TIGR4)).